Here is a 464-residue protein sequence, read N- to C-terminus: Cytochrome P450 85A1 (464 aa).

The helical transmembrane segment at A2–L22 threads the bilayer. C414 provides a ligand contact to heme.

The protein belongs to the cytochrome P450 family. Heme is required as a cofactor. In terms of tissue distribution, expressed in sub-meristematic regions of shoot and root apexes, in zones undergoing lateral root formation, in fruits, and in all flower parts, with a high expression in young flower buds and at the joint in the pedicel.

The protein localises to the membrane. The catalysed reaction is 6-deoxocastasterone + reduced [NADPH--hemoprotein reductase] + O2 = 6alpha-hydroxycastasterone + oxidized [NADPH--hemoprotein reductase] + H2O + H(+). It catalyses the reaction 6alpha-hydroxycastasterone + reduced [NADPH--hemoprotein reductase] + O2 = castasterone + oxidized [NADPH--hemoprotein reductase] + 2 H2O + H(+). The enzyme catalyses 6-deoxocastasterone + 2 reduced [NADPH--hemoprotein reductase] + 2 O2 = castasterone + 2 oxidized [NADPH--hemoprotein reductase] + 3 H2O + 2 H(+). Its pathway is plant hormone biosynthesis; brassinosteroid biosynthesis. Its function is as follows. Catalyzes the C6-oxidation step in brassinosteroids biosynthesis. Converts 6-deoxocastasterone (6-deoxoCS) to castasterone (CS). May also convert 6-deoxoteasterone (6-deoxoTE) to teasterone (TE), 3-dehydro-6-deoxoteasterone (6-deoxo3DT, 6-deoxo3DHT) to 3-dehydroteasterone (3DT, 3-DHT), and 6-deoxotyphasterol (6-deoxoTY) to typhasterol (TY), but not castasterone (CS) to brassinolide (BL). The protein is Cytochrome P450 85A1 of Solanum lycopersicum (Tomato).